A 191-amino-acid polypeptide reads, in one-letter code: UPF0669 protein C6orf120 (191 aa).

Residues 1 to 30 (MAAPRGRAAPWTTALLLLLASQVLSPGSCA) form the signal peptide. Asn53 carries an N-linked (GlcNAc...) asparagine glycan.

The protein belongs to the UPF0669 family. In terms of tissue distribution, mainly expressed in hepatocytes and some weak expression in germinal center cells of lymph nodes.

It localises to the secreted. Its function is as follows. May be involved in induction of apoptosis in CD4(+) T-cells, but not CD8(+) T-cells or hepatocytes. This is UPF0669 protein C6orf120 (C6orf120) from Homo sapiens (Human).